Here is a 231-residue protein sequence, read N- to C-terminus: Thiamine import ATP-binding protein ThiQ (231 aa).

The ABC transporter domain occupies 2-230 (LRLEDLDIRK…PPPALRGYLG (229 aa)). ATP is bound at residue 32–39 (GPSGAGKS).

It belongs to the ABC transporter superfamily. Thiamine importer (TC 3.A.1.19.1) family. The complex is composed of two ATP-binding proteins (ThiQ), two transmembrane proteins (ThiP) and a solute-binding protein (ThiB).

The protein localises to the cell inner membrane. It carries out the reaction thiamine(out) + ATP + H2O = thiamine(in) + ADP + phosphate + H(+). Functionally, part of the ABC transporter complex ThiBPQ involved in thiamine import. Responsible for energy coupling to the transport system. This is Thiamine import ATP-binding protein ThiQ from Ruegeria sp. (strain TM1040) (Silicibacter sp.).